The primary structure comprises 306 residues: Pseudouridine-5'-phosphate glycosidase (306 aa).

Catalysis depends on Glu27, which acts as the Proton donor. Lys88 and Val108 together coordinate substrate. A Mn(2+)-binding site is contributed by Asp140. Residue 142 to 144 (SAD) participates in substrate binding. Residue Lys161 is the Nucleophile of the active site.

Belongs to the pseudouridine-5'-phosphate glycosidase family. In terms of assembly, homotrimer. It depends on Mn(2+) as a cofactor.

The catalysed reaction is D-ribose 5-phosphate + uracil = psi-UMP + H2O. Its function is as follows. Catalyzes the reversible cleavage of pseudouridine 5'-phosphate (PsiMP) to ribose 5-phosphate and uracil. Functions biologically in the cleavage direction, as part of a pseudouridine degradation pathway. This Petrotoga mobilis (strain DSM 10674 / SJ95) protein is Pseudouridine-5'-phosphate glycosidase.